The primary structure comprises 700 residues: Inhibitor of carbonic anhydrase (700 aa).

The signal sequence occupies residues 1-19 (MRLLICALLCLGTLGLCLA). 2 consecutive Transferrin-like domains span residues 25 to 347 (IRWC…NLKR) and 355 to 685 (VKWC…NFRQ). Disulfide bonds link Cys-28–Cys-67, Cys-38–Cys-58, Cys-137–Cys-213, Cys-172–Cys-188, Cys-175–Cys-198, Cys-185–Cys-196, Cys-246–Cys-260, Cys-358–Cys-390, Cys-368–Cys-381, Cys-415–Cys-695, Cys-438–Cys-658, Cys-470–Cys-545, Cys-494–Cys-686, Cys-504–Cys-518, Cys-515–Cys-528, and Cys-585–Cys-599. N-linked (GlcNAc...) asparagine glycosylation occurs at Asn-664.

It belongs to the transferrin family. Monomer. Interacts (via transferrin-like domain 2) with CA2. N-glycosylated. In terms of tissue distribution, detected in blood plasma, heart, kidney, liver, colon, lung, spleen, pancreas and testis (at protein level).

The protein resides in the secreted. Its function is as follows. Inhibitor for carbonic anhydrase 2 (CA2). Does not bind iron ions. The protein is Inhibitor of carbonic anhydrase of Mus musculus (Mouse).